Reading from the N-terminus, the 177-residue chain is Austinoid biosynthesis clusters protein F (177 aa).

Belongs to the trt14 isomerase family. Homodimer.

It functions in the pathway secondary metabolite biosynthesis; terpenoid biosynthesis. Its function is as follows. Part of the gene cluster B that mediates the biosynthesis of austinol and dehydroaustinol, two fungal meroterpenoids. The first step of the pathway is the synthesis of 3,5-dimethylorsellinic acid by the polyketide synthase ausA. 3,5-dimethylorsellinic acid is then prenylated by the polyprenyl transferase ausN. Further epoxidation by the FAD-dependent monooxygenase ausM and cyclization by the probable terpene cyclase ausL lead to the formation of protoaustinoid A. Protoaustinoid A is then oxidized to spiro-lactone preaustinoid A3 by the combined action of the FAD-binding monooxygenases ausB and ausC, and the dioxygenase ausE. Acid-catalyzed keto-rearrangement and ring contraction of the tetraketide portion of preaustinoid A3 by ausJ lead to the formation of preaustinoid A4. The aldo-keto reductase ausK, with the help of ausH, is involved in the next step by transforming preaustinoid A4 into isoaustinone which is in turn hydroxylated by the P450 monooxygenase ausI to form austinolide. Finally, the cytochrome P450 monooxygenase ausG modifies austinolide to austinol. Austinol can be further modified to dehydroaustinol which forms a diffusible complex with diorcinol that initiates conidiation. Due to genetic rearrangements of the clusters and the subsequent loss of some enzymes, the end products of the Emericella nidulans austinoid biosynthesis clusters are austinol and dehydroaustinol, even if additional enzymes, such as the O-acetyltransferase ausQ and the cytochrome P450 monooxygenase ausR are still functional. The chain is Austinoid biosynthesis clusters protein F from Emericella nidulans (strain FGSC A4 / ATCC 38163 / CBS 112.46 / NRRL 194 / M139) (Aspergillus nidulans).